Here is a 293-residue protein sequence, read N- to C-terminus: 4-hydroxy-tetrahydrodipicolinate synthase (293 aa).

Threonine 45 is a pyruvate binding site. Tyrosine 133 functions as the Proton donor/acceptor in the catalytic mechanism. The active-site Schiff-base intermediate with substrate is the lysine 161. Isoleucine 203 serves as a coordination point for pyruvate.

This sequence belongs to the DapA family. In terms of assembly, homotetramer; dimer of dimers.

It is found in the cytoplasm. The enzyme catalyses L-aspartate 4-semialdehyde + pyruvate = (2S,4S)-4-hydroxy-2,3,4,5-tetrahydrodipicolinate + H2O + H(+). It functions in the pathway amino-acid biosynthesis; L-lysine biosynthesis via DAP pathway; (S)-tetrahydrodipicolinate from L-aspartate: step 3/4. Functionally, catalyzes the condensation of (S)-aspartate-beta-semialdehyde [(S)-ASA] and pyruvate to 4-hydroxy-tetrahydrodipicolinate (HTPA). In Exiguobacterium sibiricum (strain DSM 17290 / CCUG 55495 / CIP 109462 / JCM 13490 / 255-15), this protein is 4-hydroxy-tetrahydrodipicolinate synthase.